The primary structure comprises 631 residues: tRNA uridine 5-carboxymethylaminomethyl modification enzyme MnmG (631 aa).

15 to 20 (GAGHAG) contributes to the FAD binding site. Residues 214–233 (YSKTEEEPGDKEPRHFSFTS) form a disordered region. 276–290 (GPRYCPSIETKVVRF) is a binding site for NAD(+).

It belongs to the MnmG family. Homodimer. Heterotetramer of two MnmE and two MnmG subunits. The cofactor is FAD.

It is found in the cytoplasm. Functionally, NAD-binding protein involved in the addition of a carboxymethylaminomethyl (cmnm) group at the wobble position (U34) of certain tRNAs, forming tRNA-cmnm(5)s(2)U34. This Lactobacillus delbrueckii subsp. bulgaricus (strain ATCC 11842 / DSM 20081 / BCRC 10696 / JCM 1002 / NBRC 13953 / NCIMB 11778 / NCTC 12712 / WDCM 00102 / Lb 14) protein is tRNA uridine 5-carboxymethylaminomethyl modification enzyme MnmG.